The following is an 86-amino-acid chain: Neurotoxin homolog NL1 (86 aa).

The signal sequence occupies residues 1-21 (MKTLLLTLVVVTMVCMDLGYT). Cystine bridges form between Cys24-Cys45, Cys38-Cys62, Cys66-Cys78, and Cys79-Cys84.

It belongs to the three-finger toxin family. Short-chain subfamily. Orphan group VIII (haditoxin) sub-subfamily. Homodimer; non-covalently linked. As to expression, expressed by the venom gland.

It localises to the secreted. In terms of biological role, antagonist of muscle and neuronal nicotinic acetylcholine receptors (nAChR) with highest affinity for neuronal alpha-7/CHRNA7 nAChRs. This chain is Neurotoxin homolog NL1, found in Naja atra (Chinese cobra).